Consider the following 887-residue polypeptide: Centrobin (887 aa).

Residues 1-34 (MATAAPSPSSPLRPEDLLSDSSEPPGLNQVSSEV) are disordered. Serine 81 is modified (phosphoserine). Disordered stretches follow at residues 110-153 (MLHT…PSSS), 465-486 (SLRQ…LSGQ), 566-591 (TLLP…EKGE), and 636-695 (LGPP…LPPA). A compositionally biased stretch (basic and acidic residues) spans 113 to 128 (TSRDTAYRTGSERREE). The span at 133-153 (SDSTATLLNTRPLQDLSPSSS) shows a compositional bias: polar residues. Residues 191–557 (RRKHCERHIQ…LQAMLQAHWE (367 aa)) are a coiled coil. A required for centrosome localization region spans residues 360 to 887 (QEHQLKERLQ…SMRSRGGIWR (528 aa)). The segment covering 670-680 (TDDHRAERPFP) has biased composition (basic and acidic residues). At serine 782 the chain carries Phosphoserine. Residues 824 to 887 (GTDGQGELVP…SMRSRGGIWR (64 aa)) form a disordered region. The segment covering 832 to 849 (VPRRNTDSRLGETTRKEI) has biased composition (basic and acidic residues).

In terms of assembly, interacts with LYST.

The protein resides in the cytoplasm. The protein localises to the cytoskeleton. Its subcellular location is the microtubule organizing center. It is found in the centrosome. It localises to the centriole. Required for centriole duplication. Inhibition of centriole duplication leading to defects in cytokinesis. In Mus musculus (Mouse), this protein is Centrobin (Cntrob).